The chain runs to 133 residues: FPRL1 inhibitory protein (133 aa).

The N-terminal stretch at 1 to 28 (MKKNITKTIIASTVIAAGLLTQTNDAKA) is a signal peptide.

The protein belongs to the CHIPS/FLIPr family.

It is found in the secreted. Its function is as follows. May be involved in countering the first line of host defense mechanisms. Impairs the leukocyte response to FPRL1 agonists by binding directly to host FPRL1. In Staphylococcus aureus (strain USA300), this protein is FPRL1 inhibitory protein (flr).